The sequence spans 859 residues: DNA mismatch repair protein MutS (859 aa).

Residue 615–622 (GPNMGGKS) participates in ATP binding.

Belongs to the DNA mismatch repair MutS family.

In terms of biological role, this protein is involved in the repair of mismatches in DNA. It is possible that it carries out the mismatch recognition step. This protein has a weak ATPase activity. The polypeptide is DNA mismatch repair protein MutS (Chromohalobacter salexigens (strain ATCC BAA-138 / DSM 3043 / CIP 106854 / NCIMB 13768 / 1H11)).